A 178-amino-acid polypeptide reads, in one-letter code: CDP-archaeol synthase (178 aa).

The next 4 helical transmembrane spans lie at 3–23 (LLLL…ANAV), 56–76 (FFGI…VILY), 91–111 (IILS…GSFI), and 136–156 (LLFA…LLVI).

It belongs to the CDP-archaeol synthase family. Requires Mg(2+) as cofactor.

It localises to the cell membrane. The catalysed reaction is 2,3-bis-O-(geranylgeranyl)-sn-glycerol 1-phosphate + CTP + H(+) = CDP-2,3-bis-O-(geranylgeranyl)-sn-glycerol + diphosphate. It functions in the pathway membrane lipid metabolism; glycerophospholipid metabolism. In terms of biological role, catalyzes the formation of CDP-2,3-bis-(O-geranylgeranyl)-sn-glycerol (CDP-archaeol) from 2,3-bis-(O-geranylgeranyl)-sn-glycerol 1-phosphate (DGGGP) and CTP. This reaction is the third ether-bond-formation step in the biosynthesis of archaeal membrane lipids. In Methanococcus maripaludis (strain C5 / ATCC BAA-1333), this protein is CDP-archaeol synthase.